The following is a 646-amino-acid chain: Protein SENSITIVE TO UV 2 (646 aa).

The disordered stretch occupies residues 42–70 (PAPPPSTKISSSLSHPMQLQSSAGQQRKQ). The segment covering 48–70 (TKISSSLSHPMQLQSSAGQQRKQ) has biased composition (polar residues). Positions 119-126 (NRRCDSEK) match the Nuclear localization signal motif. A coiled-coil region spans residues 123–157 (DSEKDLEIDRLKKELERVSKQLLDVEQECSQLKKG). The Phosphatase tensin-type domain occupies 376–646 (KRTEQDVKQE…VFAFLGDNTI (271 aa)).

It belongs to the serpin family. In terms of assembly, forms multimers through the coiled-coil domain. In terms of processing, probably phosphorylated by ATR. Accumulates throughout the root tip.

It localises to the nucleus. The protein resides in the cytoplasm. In terms of biological role, required for tolerance to DNA-damaging and cross-linking agents such as UVB irradiation, gamma-radiation, aphidicolin, ionizing radiation and hydroxyurea (HU), cisplatin (CDDP) and mitomycin C (MMC). Involved in cell-cycle G2/M arrest in response to DNA damage. Required for aluminum-dependent gene regulation and root growth inhibition in an ATR-dependent manner by halting cell cycle progression and triggering loss of the quiescent center (QC). This chain is Protein SENSITIVE TO UV 2, found in Arabidopsis thaliana (Mouse-ear cress).